Reading from the N-terminus, the 165-residue chain is SsrA-binding protein (165 aa).

The span at 135–158 shows a compositional bias: basic and acidic residues; it reads QAHDKRQDMARRDAQREVTRELGR. The tract at residues 135-165 is disordered; sequence QAHDKRQDMARRDAQREVTRELGRRVKGMTS.

It belongs to the SmpB family.

The protein localises to the cytoplasm. Required for rescue of stalled ribosomes mediated by trans-translation. Binds to transfer-messenger RNA (tmRNA), required for stable association of tmRNA with ribosomes. tmRNA and SmpB together mimic tRNA shape, replacing the anticodon stem-loop with SmpB. tmRNA is encoded by the ssrA gene; the 2 termini fold to resemble tRNA(Ala) and it encodes a 'tag peptide', a short internal open reading frame. During trans-translation Ala-aminoacylated tmRNA acts like a tRNA, entering the A-site of stalled ribosomes, displacing the stalled mRNA. The ribosome then switches to translate the ORF on the tmRNA; the nascent peptide is terminated with the 'tag peptide' encoded by the tmRNA and targeted for degradation. The ribosome is freed to recommence translation, which seems to be the essential function of trans-translation. This Mycolicibacterium vanbaalenii (strain DSM 7251 / JCM 13017 / BCRC 16820 / KCTC 9966 / NRRL B-24157 / PYR-1) (Mycobacterium vanbaalenii) protein is SsrA-binding protein.